The following is a 142-amino-acid chain: Transcriptional regulator MraZ (142 aa).

SpoVT-AbrB domains follow at residues 5-47 (THSP…SERE) and 76-119 (ASDE…DAQA).

Belongs to the MraZ family. As to quaternary structure, forms oligomers.

The protein localises to the cytoplasm. Its subcellular location is the nucleoid. The polypeptide is Transcriptional regulator MraZ (Arthrobacter sp. (strain FB24)).